Consider the following 124-residue polypeptide: UPF0212 protein Hlac_0869 (124 aa).

It belongs to the UPF0212 family.

The sequence is that of UPF0212 protein Hlac_0869 from Halorubrum lacusprofundi (strain ATCC 49239 / DSM 5036 / JCM 8891 / ACAM 34).